A 493-amino-acid chain; its full sequence is Leucine-rich repeat-containing protein 14 (493 aa).

One copy of the LRR 1; degenerate repeat lies at 111–146 (KHTLRVLDMTGLLDDGVEQDPGTMSMWDCTAAVART). An LRR 2; degenerate repeat occupies 194 to 218 (RLCCRDLRAEDLPMRNTVALLQLLD). Residues 219 to 246 (AGCLRRVDLRFNNLGLRGLSVIIPHVAR) form an LRR 3; degenerate repeat. One copy of the LRR 4; degenerate repeat lies at 247 to 282 (FQHLASLRLHYVHGDSRQPSVDGEDNFRYFLAQMGR). 5 LRR repeats span residues 283-307 (FTCLRELSMGSSLLSGRLDQLLSTL), 308-339 (QSPLESLELAFCALLPEDLRFLARSSHAVHLK), 340-360 (KLDLSGNDLSGSQLEPFQGLL), 364-391 (AATLLHLELTECQLADTQLLATLPVLTR), and 392-416 (CASLRYLGLYGNPLSVAGLRELLRD).

This sequence belongs to the PRAME family. LRRC14 subfamily. In terms of assembly, interacts with IKBKB; disrupts IKBKB-IKBKG interaction preventing I-kappa-B-kinase (IKK) core complex formation and leading to a decrease of IKBKB phosphorylation and NF-kappaB activation. Interacts with CHUK.

The protein resides in the cytoplasm. Functionally, negatively regulates Toll-like receptor-mediated NF-kappa-B signaling by disrupting IKK core complex formation through interaction with IKBKB. This Bos taurus (Bovine) protein is Leucine-rich repeat-containing protein 14.